Here is a 401-residue protein sequence, read N- to C-terminus: GRIP domain-containing protein C119.12 (401 aa).

Positions 7–296 form a coiled coil; that stretch reads NETKLVENEN…TLLIGKLQHE (290 aa). The GRIP domain maps to 315-366; sequence NNAEKIDKQLISNLFVSFLTLPRADTKRFEILQLISSVLDWNDTQREQTGLQ.

The protein localises to the golgi apparatus lumen. This chain is GRIP domain-containing protein C119.12, found in Schizosaccharomyces pombe (strain 972 / ATCC 24843) (Fission yeast).